A 1207-amino-acid polypeptide reads, in one-letter code: DNA-directed RNA polymerase subunit beta' (1207 aa).

The Zn(2+) site is built by C60, C62, C75, and C78. D449, D451, and D453 together coordinate Mg(2+). Zn(2+)-binding residues include C822, C896, C903, and C906.

It belongs to the RNA polymerase beta' chain family. As to quaternary structure, the RNAP catalytic core consists of 2 alpha, 1 beta, 1 beta' and 1 omega subunit. When a sigma factor is associated with the core the holoenzyme is formed, which can initiate transcription. It depends on Mg(2+) as a cofactor. Zn(2+) is required as a cofactor.

It carries out the reaction RNA(n) + a ribonucleoside 5'-triphosphate = RNA(n+1) + diphosphate. Its function is as follows. DNA-dependent RNA polymerase catalyzes the transcription of DNA into RNA using the four ribonucleoside triphosphates as substrates. The polypeptide is DNA-directed RNA polymerase subunit beta' (Staphylococcus saprophyticus subsp. saprophyticus (strain ATCC 15305 / DSM 20229 / NCIMB 8711 / NCTC 7292 / S-41)).